The primary structure comprises 54 residues: Photoreceptor disk component PRCD (54 aa).

Cys-2 carries the S-palmitoyl cysteine lipid modification. The interval 25–54 is disordered; sequence PEPSDVDGAARGSSLDADPQSSGREKEPLK.

Belongs to the PRCD family. In terms of assembly, interacts with RHO/rhodopsin; the interaction promotes PRCD stability. In terms of processing, palmitoylated at Cys-2. Palmitoylation is essential for protein stability and trafficking to the photoreceptor outer segment, but does not appear to be essential for membrane localization. Probably palmitoylated by ZDHHC3. Post-translationally, phosphorylated.

Its subcellular location is the cell projection. The protein localises to the cilium. The protein resides in the photoreceptor outer segment. It is found in the membrane. It localises to the endoplasmic reticulum. Its subcellular location is the golgi apparatus. Its function is as follows. Involved in vision. The sequence is that of Photoreceptor disk component PRCD from Homo sapiens (Human).